Here is a 637-residue protein sequence, read N- to C-terminus: 1-deoxy-D-xylulose-5-phosphate synthase (637 aa).

Thiamine diphosphate-binding positions include H76 and G117 to S119. Residue D148 participates in Mg(2+) binding. Thiamine diphosphate is bound by residues G149–A150, N177, Y294, and E381. Residue N177 participates in Mg(2+) binding.

This sequence belongs to the transketolase family. DXPS subfamily. As to quaternary structure, homodimer. It depends on Mg(2+) as a cofactor. The cofactor is thiamine diphosphate.

It carries out the reaction D-glyceraldehyde 3-phosphate + pyruvate + H(+) = 1-deoxy-D-xylulose 5-phosphate + CO2. It participates in metabolic intermediate biosynthesis; 1-deoxy-D-xylulose 5-phosphate biosynthesis; 1-deoxy-D-xylulose 5-phosphate from D-glyceraldehyde 3-phosphate and pyruvate: step 1/1. Functionally, catalyzes the acyloin condensation reaction between C atoms 2 and 3 of pyruvate and glyceraldehyde 3-phosphate to yield 1-deoxy-D-xylulose-5-phosphate (DXP). The chain is 1-deoxy-D-xylulose-5-phosphate synthase from Neisseria gonorrhoeae (strain ATCC 700825 / FA 1090).